The primary structure comprises 696 residues: DNA topoisomerase 6 subunit B (696 aa).

Residues 1 to 36 are disordered; sequence MDDDAGDGAASGGTKRKVTAASSSAAAKGKAAGKGK. The segment covering 20–36 has biased composition (low complexity); sequence AASSSAAAKGKAAGKGK. Residues N88, D187, 208-209, 217-224, and K543 each bind ATP; these read TK and GKFGLGAK.

The protein belongs to the TOP6B family. Homodimer. Heterotetramer of two TOP6A and two TOP6B subunits. Interacts with SPO11-2 and TOP6A3. In terms of tissue distribution, highly expressed in flowers before pollination. Expressed in roots and shoots.

It is found in the nucleus. It catalyses the reaction ATP-dependent breakage, passage and rejoining of double-stranded DNA.. Component of the DNA topoisomerase VI involved in chromatin organization and progression of endoreduplication cycles. Relaxes both positive and negative superturns and exhibits a strong decatenase activity. The B subunit binds ATP. May be involved in cell proliferation and stress tolerance. The chain is DNA topoisomerase 6 subunit B from Oryza sativa subsp. indica (Rice).